The primary structure comprises 263 residues: L-histidine 2-aminobutanoyltransferase (263 aa).

The protein belongs to the methyltransferase superfamily. CntL family. In terms of assembly, interacts with CntM.

The catalysed reaction is L-histidine + S-adenosyl-L-methionine = (2S)-2-amino-4-{[(1S)-1-carboxy-2-(1H-imidazol-4-yl)ethyl]amino}butanoate + S-methyl-5'-thioadenosine + H(+). Catalyzes the nucleophilic attack of one alpha-aminobutanoate moiety from SAM onto L-histidine to produce the intermediate (2S)-2-amino-4-{[(1S)-1-carboxy-2-(1H-imidazol-4-yl)ethyl]amino}butanoate. Functions in the biosynthesis of the metallophore pseudopaline, which is involved in the acquisition of nickel and zinc, and thus enables bacterial growth inside the host, where metal access is limited. Therefore, this enzyme probably contributes to Pseudomonas virulence. Cannot use D-histidine in place of L-histidine as substrate. This is L-histidine 2-aminobutanoyltransferase from Pseudomonas aeruginosa (strain UCBPP-PA14).